The following is a 626-amino-acid chain: MRQATMDFSTSSVFDQHKGDSSEEVDLAMVYQAASNGDVNSLTSVIREDPSILECCDSEGCTPLMHAVSGRQVDTVKLLLKMGANINTQDAYGRTSLCLATYLGWLEGCVSLLRNGAKHNIPDKNGRLPLHAATAEPDVRLLIVLLQQSSLSEINHQDTEGMTPLHWAAFHNRPQHTQMLLKKGADPTLVDKDFKTALHWAVQSGNRILCSIILSHRQGPSIINYDDESGKTCVHIAAASGFGDIINDLAKVPECNLQALDVDDRTPLHWAAASGKAECVQSLLDLGMDSNLRDINESTPLAYALYCGHTACVRLLSREGRAEPARPLPSQNSQPQKKEGRFSMLNQIFCKNKKEEQKAHQKDQSRARPKEEETSEVNDIIATFDSVVDTNCQGQPGDQVDMVVFKKRTSENSKYLLPEKKSLARKGLPPIRTQSLPPITLGGHFLTASQGAVSHAGLNAGPQHTAQRSQKSRSEQDLLNNRTGCPVSLENPWKGDTRQVFSCKAWTVSSSDKLLDRLFAGQPGHQELSGPPHLPHLHNPSSGQALQHLSPNRPKIRDLPFTRNSLAPLPDQKFLSGEPLRTNRVLPAIPSQRGHDPSPAGESQRGHDPPRAEESGGSSSPTHDEN.

ANK repeat units follow at residues 25 to 54 (VDLA…SILE), 59 to 88 (EGCT…NINT), 92 to 124 (YGRT…IPDK), 125 to 156 (NGRL…EINH), 160 to 189 (EGMT…DPTL), 193 to 222 (DFKT…GPSI), 229 to 259 (SGKT…NLQA), 263 to 292 (DDRT…DSNL), and 296 to 325 (NEST…AEPA). Basic and acidic residues predominate over residues 354 to 372 (KEEQKAHQKDQSRARPKEE). 3 disordered regions span residues 354-377 (KEEQ…TSEV), 455-491 (HAGL…SLEN), and 522-626 (QPGH…HDEN). Position 474 is a phosphoserine (serine 474). The segment covering 604-614 (QRGHDPPRAEE) has biased composition (basic and acidic residues). The segment covering 616-626 (GGSSSPTHDEN) has biased composition (polar residues).

The sequence is that of Ankyrin repeat domain-containing protein 55 (Ankrd55) from Mus musculus (Mouse).